We begin with the raw amino-acid sequence, 224 residues long: UPF0758 protein Rpic_2712 (224 aa).

One can recognise an MPN domain in the interval 102-224; that stretch reads TFESAQSVKD…VYGFLEHGKM (123 aa). Residues histidine 173, histidine 175, and aspartate 186 each contribute to the Zn(2+) site. The short motif at 173 to 186 is the JAMM motif element; it reads HNHPTGNTEPSESD.

It belongs to the UPF0758 family.

The sequence is that of UPF0758 protein Rpic_2712 from Ralstonia pickettii (strain 12J).